A 333-amino-acid polypeptide reads, in one-letter code: Ribosomal RNA small subunit methyltransferase H (333 aa).

S-adenosyl-L-methionine is bound by residues 31–33, D49, F76, D134, and Q141; that span reads GGY.

The protein belongs to the methyltransferase superfamily. RsmH family.

It localises to the cytoplasm. It catalyses the reaction cytidine(1402) in 16S rRNA + S-adenosyl-L-methionine = N(4)-methylcytidine(1402) in 16S rRNA + S-adenosyl-L-homocysteine + H(+). Its function is as follows. Specifically methylates the N4 position of cytidine in position 1402 (C1402) of 16S rRNA. This Wolbachia sp. subsp. Brugia malayi (strain TRS) protein is Ribosomal RNA small subunit methyltransferase H.